Here is an 827-residue protein sequence, read N- to C-terminus: Cytosolic Fe-S cluster assembly factor NAR1 (827 aa).

Position 22 (Cys22) interacts with [4Fe-4S] cluster. The interval 57-77 (AYYESSTPPSSSLSAADSRPR) is disordered. The span at 61–73 (SSTPPSSSLSAAD) shows a compositional bias: low complexity. [4Fe-4S] cluster-binding residues include Cys92, Cys95, and Cys98. Residues 209–231 (RENARKRAKLSNAPADDDDRLHP) form a disordered region. Residues Cys246, Cys307, Cys591, and Cys595 each coordinate [4Fe-4S] cluster. Disordered regions lie at residues 599-637 (GGQI…WAAD) and 709-739 (DQGG…NAKS). Composition is skewed to polar residues over residues 604–621 (PPTQ…TVDN) and 713–738 (ANDS…SNAK).

This sequence belongs to the NARF family.

Its function is as follows. Component of the cytosolic Fe/S protein assembly machinery. Required for maturation of extramitochondrial Fe/S proteins. May play a role in the transfer of pre-assembled Fe/S clusters to target apoproteins. This Mycosarcoma maydis (Corn smut fungus) protein is Cytosolic Fe-S cluster assembly factor NAR1 (NAR1).